The primary structure comprises 602 residues: MASSSASDCDAHPVERESMRKVSQDGVRQDMSKSGPRLPGESAITDKEVIYICPFSGPVKGRLYITNYRLYLRSLETDLAPILDVPLGVISRIEKMGGVTSRGENSYGLDITCKDLRNLRFALKQEGHSRRDIFDVLTRHAFPLAYNLPLFAFVNEEKFKVDGWAIYNPVEEYRRQGLPDRHWRISFVNQRYELCDTYPALLVVPYRASDDDLRRVATFRSRNRIPVLSWIHPENRAAIMRCSQPLVGVGGKRSRDDERYLDIIRETNKQTSKLTIYDARPGVNAVANKATGGGYEGEDAYPHAELSFLDIHNIHVMRESLRRVRDIVYPHVEEAHWLSSLESTHWLEHIKLLLTGAIRVADKVASGLSSVLVHCSDGWDRTAQLTTLAMLMLDGFYRSIEGFEILVQKEWISFGHKFSSRIGHGDKNHADADRSPIFLQFIDCVWQMTKQFPTAFEFNECFLVAILDHLYSCRFGTFLLNCEAARERQRLAERTVSVWSLINSNKDEFTNPFYARESNRVIYPVTSVRHLELWVNYYIRWNPRIRQQPHPMEQRYNELLALRDDYIKKLEELQLATPTKLTDSSTPPSGSAQIAPRMQTHF.

Residues 1-40 (MASSSASDCDAHPVERESMRKVSQDGVRQDMSKSGPRLPG) are disordered. Residues 9 to 31 (CDAHPVERESMRKVSQDGVRQDM) show a composition bias toward basic and acidic residues. A Phosphoserine modification is found at serine 18. Positions 28 to 97 (RQDMSKSGPR…GVISRIEKMG (70 aa)) constitute a GRAM domain. Positions 163 to 538 (GWAIYNPVEE…RHLELWVNYY (376 aa)) constitute a Myotubularin phosphatase domain. Asparagine 288, asparagine 313, and isoleucine 314 together coordinate a 1,2-diacyl-sn-glycero-3-phospho-(1D-myo-inositol-3,5-bisphosphate). A 1,2-diacyl-sn-glycero-3-phospho-(1D-myo-inositol-3-phosphate)-binding residues include asparagine 288, asparagine 313, and isoleucine 314. The Phosphocysteine intermediate role is filled by cysteine 375. The a 1,2-diacyl-sn-glycero-3-phospho-(1D-myo-inositol-3,5-bisphosphate) site is built by serine 376, aspartate 377, glycine 378, tryptophan 379, aspartate 380, arginine 381, lysine 417, and arginine 421. A 1,2-diacyl-sn-glycero-3-phospho-(1D-myo-inositol-3-phosphate) contacts are provided by serine 376, aspartate 377, glycine 378, tryptophan 379, aspartate 380, and arginine 381. Arginine 421 contributes to the a 1,2-diacyl-sn-glycero-3-phospho-(1D-myo-inositol-3-phosphate) binding site. Threonine 495 carries the phosphothreonine modification. Residues 578–592 (PTKLTDSSTPPSGSA) are compositionally biased toward polar residues. The tract at residues 578 to 602 (PTKLTDSSTPPSGSAQIAPRMQTHF) is disordered.

Belongs to the protein-tyrosine phosphatase family. Non-receptor class myotubularin subfamily. As to quaternary structure, heterodimer with MTMR12. Interacts with KMT2A/MLL1 (via SET domain). Interacts with DES in skeletal muscle but not in cardiac muscle. Interacts with SPEG.

It localises to the cytoplasm. The protein resides in the cell membrane. The protein localises to the cell projection. It is found in the filopodium. Its subcellular location is the ruffle. It localises to the late endosome. The protein resides in the myofibril. The protein localises to the sarcomere. It carries out the reaction a 1,2-diacyl-sn-glycero-3-phospho-(1D-myo-inositol-3-phosphate) + H2O = a 1,2-diacyl-sn-glycero-3-phospho-(1D-myo-inositol) + phosphate. The catalysed reaction is a 1,2-diacyl-sn-glycero-3-phospho-(1D-myo-inositol-3,5-bisphosphate) + H2O = a 1,2-diacyl-sn-glycero-3-phospho-(1D-myo-inositol-5-phosphate) + phosphate. It catalyses the reaction 1,2-dioctanoyl-sn-glycero-3-phospho-(1-D-myo-inositol-3-phosphate) + H2O = 1,2-dioctanoyl-sn-glycero-3-phospho-(1D-myo-inositol) + phosphate. The enzyme catalyses 1,2-dioctanoyl-sn-glycero-3-phospho-(1D-myo-inositol-3,5-bisphosphate) + H2O = 1,2-dioctanoyl-sn-glycero-3-phospho-(1D-myo-inositol-5-phosphate) + phosphate. It carries out the reaction 1,2-dihexadecanoyl-sn-glycero-3-phospho-(1D-myo-inositol-3,5-phosphate) + H2O = 1,2-dihexadecanoyl-sn-glycero-3-phospho-(1D-myo-inositol-5-phosphate) + phosphate. With respect to regulation, allosterically activated by phosphatidylinositol 5-phosphate (PI5P). Functionally, lipid phosphatase which dephosphorylates phosphatidylinositol 3-monophosphate (PI3P) and phosphatidylinositol 3,5-bisphosphate (PI(3,5)P2). Has also been shown to dephosphorylate phosphotyrosine- and phosphoserine-containing peptides. Negatively regulates EGFR degradation through regulation of EGFR trafficking from the late endosome to the lysosome. Plays a role in vacuolar formation and morphology. Regulates desmin intermediate filament assembly and architecture. Plays a role in mitochondrial morphology and positioning. Required for skeletal muscle maintenance but not for myogenesis. In skeletal muscles, stabilizes MTMR12 protein levels. The polypeptide is Myotubularin (Rattus norvegicus (Rat)).